We begin with the raw amino-acid sequence, 556 residues long: DNA ligase (556 aa).

Residue Glu-245 coordinates ATP. Catalysis depends on Lys-247, which acts as the N6-AMP-lysine intermediate. Positions 252, 267, 296, 336, 408, and 414 each coordinate ATP.

The protein belongs to the ATP-dependent DNA ligase family. Requires Mg(2+) as cofactor.

The enzyme catalyses ATP + (deoxyribonucleotide)n-3'-hydroxyl + 5'-phospho-(deoxyribonucleotide)m = (deoxyribonucleotide)n+m + AMP + diphosphate.. Functionally, DNA ligase that seals nicks in double-stranded DNA during DNA replication, DNA recombination and DNA repair. The chain is DNA ligase from Methanosphaerula palustris (strain ATCC BAA-1556 / DSM 19958 / E1-9c).